We begin with the raw amino-acid sequence, 145 residues long: Small ribosomal subunit protein uS19 (145 aa).

An N-acetylalanine modification is found at Ala2. Lys108 participates in a covalent cross-link: Glycyl lysine isopeptide (Lys-Gly) (interchain with G-Cter in SUMO2).

The protein belongs to the universal ribosomal protein uS19 family. Component of the small ribosomal subunit.

The protein localises to the cytoplasm. In terms of biological role, component of the small ribosomal subunit. The ribosome is a large ribonucleoprotein complex responsible for the synthesis of proteins in the cell. This chain is Small ribosomal subunit protein uS19 (RPS15), found in Mesocricetus auratus (Golden hamster).